The sequence spans 141 residues: Lutropin subunit beta (141 aa).

The N-terminal stretch at 1-20 (MEMLQGLLLWLLLSMGGARA) is a signal peptide. 6 cysteine pairs are disulfide-bonded: cysteine 29–cysteine 77, cysteine 43–cysteine 92, cysteine 46–cysteine 130, cysteine 54–cysteine 108, cysteine 58–cysteine 110, and cysteine 113–cysteine 120. N-linked (GlcNAc...) asparagine glycosylation is found at asparagine 33 and asparagine 50.

The protein belongs to the glycoprotein hormones subunit beta family. In terms of assembly, heterodimer of a common alpha chain and a unique beta chain which confers biological specificity to thyrotropin, lutropin, follitropin and gonadotropin.

It localises to the secreted. Promotes spermatogenesis and ovulation by stimulating the testes and ovaries to synthesize steroids. The polypeptide is Lutropin subunit beta (LHB) (Macaca fascicularis (Crab-eating macaque)).